The primary structure comprises 542 residues: 1,3-beta-glucanosyltransferase gas1 (542 aa).

The N-terminal stretch at 1-19 is a signal peptide; that stretch reads MKFSILSLAVAGLVGLAKA. N-linked (GlcNAc...) asparagine glycosylation is present at asparagine 35. The cysteines at positions 70 and 99 are disulfide-linked. Tyrosine 88 contributes to the (1,3-beta-D-glucosyl)n binding site. Asparagine 91 carries an N-linked (GlcNAc...) asparagine glycan. (1,3-beta-D-glucosyl)n contacts are provided by asparagine 156 and glutamate 157. Glutamate 157 acts as the Proton donor in catalysis. N-linked (GlcNAc...) asparagine glycosylation is present at asparagine 161. The (1,3-beta-D-glucosyl)n site is built by aspartate 198 and arginine 203. 5 cysteine pairs are disulfide-bonded: cysteine 212/cysteine 345, cysteine 230/cysteine 261, cysteine 367/cysteine 419, cysteine 376/cysteine 439, and cysteine 395/cysteine 400. Asparagine 249 carries an N-linked (GlcNAc...) asparagine glycan. The active-site Nucleophile is the glutamate 258. N-linked (GlcNAc...) asparagine glycosylation is present at asparagine 279. Tyrosine 290 contacts (1,3-beta-D-glucosyl)n. 4 N-linked (GlcNAc...) asparagine glycosylation sites follow: asparagine 406, asparagine 484, asparagine 502, and asparagine 509. The disordered stretch occupies residues 490 to 515; that stretch reads MSTSYTSGSGSSNSSGSSSNSSSKSS. Serine 516 carries the GPI-anchor amidated serine lipid modification. A propeptide spans 517-542 (removed in mature form); sequence GASSYNLNMVITFLSVVIGGTAVLFI.

It belongs to the glycosyl hydrolase 72 family. In terms of processing, the GPI-anchor is attached to the protein in the endoplasmic reticulum and serves to target the protein to the cell surface. There, the glucosamine-inositol phospholipid moiety is cleaved off and the GPI-modified mannoprotein is covalently attached via its lipidless GPI glycan remnant to the 1,6-beta-glucan of the outer cell wall layer.

The protein resides in the secreted. Its subcellular location is the cell wall. It is found in the membrane. Its function is as follows. Splits internally a 1,3-beta-glucan molecule and transfers the newly generated reducing end (the donor) to the non-reducing end of another 1,3-beta-glucan molecule (the acceptor) forming a 1,3-beta linkage, resulting in the elongation of 1,3-beta-glucan chains in the cell wall. This Schizosaccharomyces pombe (strain 972 / ATCC 24843) (Fission yeast) protein is 1,3-beta-glucanosyltransferase gas1 (gas1).